A 120-amino-acid polypeptide reads, in one-letter code: Ribonuclease P protein component (120 aa).

The protein belongs to the RnpA family. In terms of assembly, consists of a catalytic RNA component (M1 or rnpB) and a protein subunit.

The enzyme catalyses Endonucleolytic cleavage of RNA, removing 5'-extranucleotides from tRNA precursor.. RNaseP catalyzes the removal of the 5'-leader sequence from pre-tRNA to produce the mature 5'-terminus. It can also cleave other RNA substrates such as 4.5S RNA. The protein component plays an auxiliary but essential role in vivo by binding to the 5'-leader sequence and broadening the substrate specificity of the ribozyme. The chain is Ribonuclease P protein component from Latilactobacillus sakei subsp. sakei (strain 23K) (Lactobacillus sakei subsp. sakei).